Consider the following 517-residue polypeptide: Putative succinate-semialdehyde dehydrogenase [NADP(+)] (517 aa).

Residues 157-158 (WN), 181-184 (KPDS), and 232-233 (GS) each bind NADP(+). The active-site Proton acceptor is the Glu254. Leu255 lines the NADP(+) pocket. Cys288 (nucleophile) is an active-site residue. Position 386 (Glu386) interacts with NADP(+).

This sequence belongs to the aldehyde dehydrogenase family.

The enzyme catalyses succinate semialdehyde + NADP(+) + H2O = succinate + NADPH + 2 H(+). In terms of biological role, catalyzes the NADP(+)-dependent oxidation of succinate semialdehyde to succinate. Although it has succinate semialdehyde dehydrogenase activity, is likely to act physiologically on a different aldehyde(s). The sequence is that of Putative succinate-semialdehyde dehydrogenase [NADP(+)] (gabD2) from Mycolicibacterium smegmatis (strain ATCC 700084 / mc(2)155) (Mycobacterium smegmatis).